We begin with the raw amino-acid sequence, 71 residues long: Ranatuerin-2P (71 aa).

Residues 1–20 (MFTMKKSLLLFFFLGTISLS) form the signal peptide. Residues 21–44 (LCEQERGADEDDGVEITEEEVKRG) constitute a propeptide that is removed on maturation. Cysteine 66 and cysteine 71 form a disulfide bridge.

As to expression, expressed by the skin glands.

The protein resides in the secreted. Functionally, antibacterial activity against Gram-positive bacterium S.aureus and Gram-negative bacterium E.coli. Has activity against C.albicans. This is Ranatuerin-2P from Lithobates pipiens (Northern leopard frog).